Reading from the N-terminus, the 85-residue chain is Beta-insect depressant toxin Lqh-dprIT3e (85 aa).

The signal sequence occupies residues 1 to 21 (MKLLLLLTISASMLIEGLVNA). The LCN-type CS-alpha/beta domain maps to 22-82 (DGYIRGGDGC…EWDYETDTCG (61 aa)). 4 disulfides stabilise this stretch: Cys31–Cys81, Cys35–Cys56, Cys42–Cys63, and Cys46–Cys65. Glycine amide is present on Gly82.

It belongs to the long (4 C-C) scorpion toxin superfamily. Sodium channel inhibitor family. Beta subfamily. In terms of tissue distribution, expressed by the venom gland.

Its subcellular location is the secreted. Functionally, depressant insect beta-toxins cause a transient contraction paralysis followed by a slow flaccid paralysis. They bind voltage-independently at site-4 of sodium channels (Nav) and block action potentials, primarily by depolarizing the axonal membrane and suppressing the sodium current. This depressant toxin is active only on insects. It is found in a relatively small amount in the venom. This Leiurus hebraeus (Hebrew deathstalker scorpion) protein is Beta-insect depressant toxin Lqh-dprIT3e.